A 299-amino-acid polypeptide reads, in one-letter code: Small ribosomal subunit protein uS2 (299 aa).

The interval 227 to 299 (SERKSEKSTK…DKAKASNEEE (73 aa)) is disordered.

Belongs to the universal ribosomal protein uS2 family.

The sequence is that of Small ribosomal subunit protein uS2 from Christiangramia forsetii (strain DSM 17595 / CGMCC 1.15422 / KT0803) (Gramella forsetii).